The chain runs to 562 residues: MTAVASTSGKQDADHNQSIECPRFSRGQKEILLDHEDAKGKDSIINSPVSGRQSISPTLSNATTTTTKSIMNATGTSGAVVSNTPEPGLKRVPAVTFSDLKQQQKQDSLTQLKNDSERTKSPNSNPAPVSNSIPGNHAVIPNHTNTSRTTQLSGSPLVNEMKDYDPKKKDSALKIVDTMKPDKIMATSTPISRENNKVTAKAPTSITLRKEDAQDQANNVSGQINVRSTPEETPVKQSVIPSIIPKRENSKNLDPRLPQDDGKLHVLFGATGSLSVFKIKPMIKKLEEIYGRDRISIQVILTQSATQFFEQRYTKKIIKSSEKLNKMSQYESTPATPVTPTPGQCNMAQVVELPPHIQLWTDQDEWDAWKQRTDPVLHIELRRWADILVVAPLTANTLSKIALGLCDNLLTSVIRAWNPSYPILLAPSMVSSTFNSMMTKKQLQTIKEEMSWVTVFKPSEKVMDINGDIGLGGMMDWNEIVNKIVMKLGGYPKNNEEEDDDEDEEEDDDEEEDTEDKNENNNDDDDDDDDDDDDDDDDDDDDDDDDEDEDEAETPGIIDKHQ.

A compositionally biased stretch (polar residues) spans 1 to 10 (MTAVASTSGK). 3 disordered regions span residues 1 to 63 (MTAV…SNAT), 97 to 165 (FSDL…KDYD), and 490 to 562 (GYPK…DKHQ). The segment covering 27-42 (GQKEILLDHEDAKGKD) has biased composition (basic and acidic residues). 2 stretches are compositionally biased toward polar residues: residues 44–63 (IINS…SNAT) and 99–113 (DLKQ…TQLK). Serine 47, serine 50, serine 54, and serine 56 each carry phosphoserine. A compositionally biased stretch (low complexity) spans 121–134 (SPNSNPAPVSNSIP). Residues 142 to 156 (NHTNTSRTTQLSGSP) are compositionally biased toward polar residues. The residue at position 155 (serine 155) is a Phosphoserine. The span at 496–553 (EEEDDDEDEEEDDDEEEDTEDKNENNNDDDDDDDDDDDDDDDDDDDDDDDDEDEDEAE) shows a compositional bias: acidic residues.

It belongs to the HFCD (homooligomeric flavin containing Cys decarboxylase) superfamily. As to quaternary structure, interacts with the C-terminal domain of PPZ1. Component of the phosphopantothenoylcysteine decarboxylase (PPCDC) complex, a heterotrimer composed of CAB3, SIS2 and VHS3.

Its subcellular location is the nucleus. The protein localises to the cytoplasm. In terms of biological role, component of the phosphopantothenoylcysteine decarboxylase (PPCDC) involved in the coenzyme A synthesis. Acts as an inhibitory subunit of protein phosphatase PPZ1, which is involved in many cellular processes such as G1-S transition or salt tolerance. Also modulates the expression of the ENA1 ATPase. This chain is Phosphopantothenoylcysteine decarboxylase subunit SIS2 (SIS2), found in Saccharomyces cerevisiae (strain ATCC 204508 / S288c) (Baker's yeast).